Consider the following 114-residue polypeptide: MADQYHEPVSELTGKDRDFVRALNSLKEEIEAVAWYHQRVVTTKDETVRKILEHNRDEEMEHAAMLLEWLRRNMPGWDEALRTYLFTDKPITEIEEETSGGSENTGGDLGIRKL.

Glu29, Glu59, and His62 together coordinate Fe cation. The tract at residues 86–114 (FTDKPITEIEEETSGGSENTGGDLGIRKL) is cargo-loading peptide. The segment at 94-114 (IEEETSGGSENTGGDLGIRKL) is disordered. The segment covering 103–114 (ENTGGDLGIRKL) has biased composition (gly residues).

Belongs to the ferritin-like superfamily. Probably forms a decamer which binds to the pentameric axis of the interior of the protein shell; as the Flp cargo protein is flexible, packing into the shell is not rigid. 3, 4 or 5 cargo decamers bind inside the encapulin nanocompartment. It depends on Fe cation as a cofactor.

The protein localises to the encapsulin nanocompartment. In terms of biological role, cargo protein of a type 1 encapsulin nanocompartment. A ferritin-like protein that probably stores iron in the encapsulin nanocompartment. In Thermotoga maritima (strain ATCC 43589 / DSM 3109 / JCM 10099 / NBRC 100826 / MSB8), this protein is Ferritin-like protein.